We begin with the raw amino-acid sequence, 139 residues long: Mitochondrial intermembrane space import and assembly protein 40 (139 aa).

3 disulfide bridges follow: Cys53-Cys55, Cys64-Cys97, and Cys74-Cys87. A CHCH domain is found at 61–105 (SGPCGEQFKSAFSCFHYSTEDIKGSDCIDQFRAMQECMQKYPDLY). 2 consecutive short sequence motifs (cx9C motif) follow at residues 64–74 (CGEQFKSAFSC) and 87–97 (CIDQFRAMQEC). The interval 102–139 (PDLYPQDEEEEEEAKPVEPVEETADTKVSAAKEQGTSS) is disordered. The span at 106 to 124 (PQDEEEEEEAKPVEPVEET) shows a compositional bias: acidic residues.

In terms of assembly, monomer. Can form homooligomers. Interacts with GFER and forms transient disulfide bonds with GFER. Interacts with MICU1. Interacts with COX19 forming transient intermolecular disulfide bridges. Interacts with COA7 through transient intermolecular disulfide bonds. Interacts with AIFM1; the interaction increases in presence of NADH. Interacts with NDUFB10. Forms intrachain disulfide bridges, but exists in different redox states. As to expression, widely expressed. Present at high level in liver and kidney, followed by lung, brain, heart and spleen (at protein level).

The protein localises to the mitochondrion intermembrane space. In terms of biological role, central component of a redox-sensitive mitochondrial intermembrane space import machinery which is required for the biogenesis of respiratory chain complexes. Functions as chaperone and catalyzes the formation of disulfide bonds in substrate proteins, such as COX17, COX19, MICU1 and COA7. Required for the import and folding of small cysteine-containing proteins (small Tim) in the mitochondrial intermembrane space (IMS). Required for the import of COA7 in the IMS. Precursor proteins to be imported into the IMS are translocated in their reduced form into the mitochondria. The oxidized form of CHCHD4/MIA40 forms a transient intermolecular disulfide bridge with the reduced precursor protein, resulting in oxidation of the precursor protein that now contains an intramolecular disulfide bond and is able to undergo folding in the IMS. Reduced CHCHD4/MIA40 is then reoxidized by GFER/ERV1 via a disulfide relay system. Mediates formation of disulfide bond in MICU1 in the IMS, promoting formation of the MICU1-MICU2 heterodimer that regulates mitochondrial calcium uptake. This Mus musculus (Mouse) protein is Mitochondrial intermembrane space import and assembly protein 40 (Chchd4).